The chain runs to 79 residues: Cell division protein ZapB (79 aa).

Residues 3-79 are a coiled coil; it reads LEVFEKLEAK…QALLGRMEEV (77 aa). Residues 36–45 show a composition bias toward polar residues; the sequence is SLTQEVQSAQ. Residues 36–63 are disordered; that stretch reads SLTQEVQSAQHQREELERENNSLKEQQS. Basic and acidic residues predominate over residues 46-57; sequence HQREELERENNS.

This sequence belongs to the ZapB family. In terms of assembly, homodimer. The ends of the coiled-coil dimer bind to each other, forming polymers. Interacts with FtsZ.

It is found in the cytoplasm. Its function is as follows. Non-essential, abundant cell division factor that is required for proper Z-ring formation. It is recruited early to the divisome by direct interaction with FtsZ, stimulating Z-ring assembly and thereby promoting cell division earlier in the cell cycle. Its recruitment to the Z-ring requires functional FtsA or ZipA. This chain is Cell division protein ZapB, found in Salmonella agona (strain SL483).